The chain runs to 268 residues: Tryptophan synthase alpha chain (268 aa).

Catalysis depends on proton acceptor residues Glu-40 and Asp-51.

It belongs to the TrpA family. In terms of assembly, tetramer of two alpha and two beta chains.

The catalysed reaction is (1S,2R)-1-C-(indol-3-yl)glycerol 3-phosphate + L-serine = D-glyceraldehyde 3-phosphate + L-tryptophan + H2O. It participates in amino-acid biosynthesis; L-tryptophan biosynthesis; L-tryptophan from chorismate: step 5/5. Its function is as follows. The alpha subunit is responsible for the aldol cleavage of indoleglycerol phosphate to indole and glyceraldehyde 3-phosphate. This Geobacillus thermodenitrificans (strain NG80-2) protein is Tryptophan synthase alpha chain.